A 497-amino-acid polypeptide reads, in one-letter code: MAWNTNLRGRLPITCLILQVTMVVLFGVFVRYDIQADAHWWLEKKRKNISSDVENEFYYRYPSFEDVHAMVFVGFGFLMTYLQRYGFSAVGFNFLLAAFGIQWALLMQGWFHFFEEGHILLSVENLIQADFCVASTCVAFGAVLGKISPMQLLIMTFFQVTLFTVNEFILLNLIEAKDAGGSMTIHTFGAYFGLTVTWILYRKNLEQSKQRQSSVYHSDLFAMIGTLFLWIYWPSFNSASSFHGDTQHRAALNTYLSLAASVLTTVAVSSVIHKKGKLDMVHIQNATLAGGVGVGTAAEMMLTPYGALIVGFFCGILSTLGFAYLSPFLESRLRIQDTCGIHNLHGIPGIIGGIVGAVTAAYSSPDVYGEPGIVHSFGFGGYKADWTKRMQGRSQIFGLLLSLAMALVGGIIVGFILKLPFWGQASDENCFEDAIYWEVPEEVNTVYIPEDLAHKHSTSLVPAIPLVLSTPSASIVPPVPPTPPASLATVTSSSLVH.

Topologically, residues 1–9 (MAWNTNLRG) are cytoplasmic. A helical membrane pass occupies residues 10–30 (RLPITCLILQVTMVVLFGVFV). Topologically, residues 31-61 (RYDIQADAHWWLEKKRKNISSDVENEFYYRY) are extracellular. An N-linked (GlcNAc...) asparagine glycan is attached at N48. Residues 62-82 (PSFEDVHAMVFVGFGFLMTYL) traverse the membrane as a helical segment. At 83–93 (QRYGFSAVGFN) the chain is on the cytoplasmic side. A helical membrane pass occupies residues 94 to 114 (FLLAAFGIQWALLMQGWFHFF). The Extracellular portion of the chain corresponds to 115-125 (EEGHILLSVEN). The chain crosses the membrane as a helical span at residues 126 to 145 (LIQADFCVASTCVAFGAVLG). Residues 146–151 (KISPMQ) are Cytoplasmic-facing. Residues 152–174 (LLIMTFFQVTLFTVNEFILLNLI) form a helical membrane-spanning segment. Residues 175–179 (EAKDA) are Extracellular-facing. A helical membrane pass occupies residues 180–200 (GGSMTIHTFGAYFGLTVTWIL). The Cytoplasmic segment spans residues 201–219 (YRKNLEQSKQRQSSVYHSD). Residues 220 to 240 (LFAMIGTLFLWIYWPSFNSAS) form a helical membrane-spanning segment. At 241–251 (SFHGDTQHRAA) the chain is on the extracellular side. The chain crosses the membrane as a helical span at residues 252–272 (LNTYLSLAASVLTTVAVSSVI). The Cytoplasmic segment spans residues 273 to 282 (HKKGKLDMVH). A helical membrane pass occupies residues 283-303 (IQNATLAGGVGVGTAAEMMLT). A topological domain (extracellular) is located at residue P304. Residues 305–325 (YGALIVGFFCGILSTLGFAYL) traverse the membrane as a helical segment. Over 326–340 (SPFLESRLRIQDTCG) the chain is Cytoplasmic. Residues 341–361 (IHNLHGIPGIIGGIVGAVTAA) traverse the membrane as a helical segment. Residues 362–395 (YSSPDVYGEPGIVHSFGFGGYKADWTKRMQGRSQ) lie on the Extracellular side of the membrane. Residues 396-416 (IFGLLLSLAMALVGGIIVGFI) form a helical membrane-spanning segment. Residues 417–497 (LKLPFWGQAS…ATVTSSSLVH (81 aa)) lie on the Cytoplasmic side of the membrane.

Belongs to the ammonium transporter (TC 2.A.49) family. Rh subfamily. In terms of assembly, homotrimer. In terms of processing, N-glycosylated. As to expression, expressed by connecting tubule cells and intercalated cells of the collecting duct in kidney (at protein level).

It is found in the cell membrane. Its subcellular location is the apical cell membrane. It carries out the reaction NH4(+)(in) = NH4(+)(out). The catalysed reaction is methylamine(out) = methylamine(in). The enzyme catalyses CO2(out) = CO2(in). Functionally, ammonium transporter involved in the maintenance of acid-base homeostasis. Transports ammonium and its related derivative methylammonium across the plasma membrane of epithelial cells likely contributing to renal transepithelial ammonia transport and ammonia metabolism. Postulated to primarily mediate an electroneutral bidirectional transport of NH3 ammonia species according to a mechanism that implies interaction of an NH4(+) ion with acidic residues of the pore entry followed by dissociation of NH4(+) into NH3 and H(+). As a result NH3 transits through the central pore and is protonated on the extracellular side reforming NH4(+). May act as a CO2 channel providing for renal acid secretion. The protein is Ammonium transporter Rh type C (Rhcg) of Rattus norvegicus (Rat).